Reading from the N-terminus, the 233-residue chain is Small ribosomal subunit protein uS3 (233 aa).

One can recognise a KH type-2 domain in the interval 39-107; the sequence is VRQFLMKTLE…PVQINISEVR (69 aa).

This sequence belongs to the universal ribosomal protein uS3 family. Part of the 30S ribosomal subunit. Forms a tight complex with proteins S10 and S14.

Functionally, binds the lower part of the 30S subunit head. Binds mRNA in the 70S ribosome, positioning it for translation. The chain is Small ribosomal subunit protein uS3 from Buchnera aphidicola subsp. Acyrthosiphon pisum (strain 5A).